Reading from the N-terminus, the 466-residue chain is Alpha-1A adrenergic receptor (466 aa).

Residues 1 to 27 (MVLLSENASEGSNCTHPPAPVNISKAI) are Extracellular-facing. 3 N-linked (GlcNAc...) asparagine glycosylation sites follow: Asn-7, Asn-13, and Asn-22. Residues 28–51 (LLGVILGGLIIFGVLGNILVILSV) form a helical membrane-spanning segment. Residues 52–64 (ACHRHLHSVTHYY) are Cytoplasmic-facing. Residues 65–88 (IVNLAVADLLLTSTVLPFSAIFEI) form a helical membrane-spanning segment. Residues 89-99 (LGYWAFGRVFC) lie on the Extracellular side of the membrane. Cys-99 and Cys-176 are disulfide-bonded. Residues 100–122 (NIWAAVDVLCCTASIMGLCIISI) form a helical membrane-spanning segment. At 123–143 (DRYIGVSYPLRYPTIVTQRRG) the chain is on the cytoplasmic side. A helical membrane pass occupies residues 144–167 (VRALLCVWVLSLVISIGPLFGWRQ). Topologically, residues 168–181 (PAPEDETICQINEE) are extracellular. The helical transmembrane segment at 182-205 (PGYVLFSALGSFYVPLAIILVMYC) threads the bilayer. The Cytoplasmic segment spans residues 206-273 (RVYVVAKRES…FSREKKAAKT (68 aa)). A Phosphoserine; by PKA modification is found at Ser-215. A helical transmembrane segment spans residues 274 to 297 (LGIVVGCFVLCWLPFFLVMPIGSF). The Extracellular portion of the chain corresponds to 298–305 (FPDFKPSE). The chain crosses the membrane as a helical span at residues 306–329 (TVFKIVFWLGYLNSCINPIIYPCS). Topologically, residues 330 to 466 (SQEFKKAFQN…ISLGENGEEV (137 aa)) are cytoplasmic. The short motif at 334 to 349 (KKAFQNVLRIQCLRRR) is the Nuclear localization signal element. Cys-345 carries the S-palmitoyl cysteine lipid modification.

Belongs to the G-protein coupled receptor 1 family. Adrenergic receptor subfamily. ADRA1A sub-subfamily. Homo- and heterooligomer. Heterooligomerizes with ADRA1B homooligomers in cardiac myocytes. Interacts with CAVIN4. C-terminal Ser or Thr residues may be phosphorylated. As to expression, abundant in heart, brain, aorta, vena cava, vas deferens, submaxillary gland, lung, and kidney. Found at lower levels in prostate, parotid gland and skeletal muscle.

The protein localises to the nucleus membrane. It localises to the cell membrane. Its subcellular location is the cytoplasm. The protein resides in the membrane. It is found in the caveola. In terms of biological role, this alpha-adrenergic receptor mediates its action by association with G proteins that activate a phosphatidylinositol-calcium second messenger system. Its effect is mediated by G(q) and G(11) proteins. Nuclear ADRA1A-ADRA1B heterooligomers regulate phenylephrine (PE)-stimulated ERK signaling in cardiac myocytes. This chain is Alpha-1A adrenergic receptor (Adra1a), found in Rattus norvegicus (Rat).